Reading from the N-terminus, the 177-residue chain is Endothelin-2 (177 aa).

Residues 1–23 (MPTALCSIALALLVALHEGKSQA) form the signal peptide. A propeptide spanning residues 24–45 (ATTPIPEQPAPLPRARGSHLRT) is cleaved from the precursor. 2 disulfides stabilise this stretch: C48/C62 and C50/C58. Positions 69 to 177 (VNTPGQTAPY…RPTHSRQRKR (109 aa)) are excised as a propeptide. The interval 95 to 110 (CECYSARDPACATFCH) is endothelin-like. The tract at residues 155-177 (HFARQQQKPTRETRPTHSRQRKR) is disordered.

Belongs to the endothelin/sarafotoxin family. Expressed in various organs including heart, lung, liver, kidney, gastrointestinal tract, uterus and ovary, but not in spleen. Within the gastrointestinal tract, gene expression was detected in rumen, a ruminant-specific digestive organ, as well as stomach, duodenum and colon.

The protein localises to the secreted. Endothelins are endothelium-derived vasoconstrictor peptides. This chain is Endothelin-2 (EDN2), found in Bos taurus (Bovine).